The chain runs to 343 residues: Apolipoprotein L6 (343 aa).

Positions 1–10 are enriched in basic and acidic residues; it reads MDNQAERESE. The segment at 1 to 24 is disordered; the sequence is MDNQAERESEAGVGLQRDEDDAPL.

It belongs to the apolipoprotein L family. In terms of tissue distribution, widely expressed; highly expressed in the uterus, fetal brain and spinal cord, also detected in heart, liver, lung, colon, spleen, thymus, prostate, placenta, adrenal gland, salivary and mammary gland.

The protein localises to the cytoplasm. In terms of biological role, may affect the movement of lipids in the cytoplasm or allow the binding of lipids to organelles. This chain is Apolipoprotein L6 (APOL6), found in Homo sapiens (Human).